Consider the following 447-residue polypeptide: Phosphoglucosamine mutase (447 aa).

The active-site Phosphoserine intermediate is the serine 100. Positions 100, 239, 241, and 243 each coordinate Mg(2+). The residue at position 100 (serine 100) is a Phosphoserine.

This sequence belongs to the phosphohexose mutase family. Requires Mg(2+) as cofactor. Activated by phosphorylation.

The catalysed reaction is alpha-D-glucosamine 1-phosphate = D-glucosamine 6-phosphate. Its function is as follows. Catalyzes the conversion of glucosamine-6-phosphate to glucosamine-1-phosphate. The polypeptide is Phosphoglucosamine mutase (Dictyoglomus turgidum (strain DSM 6724 / Z-1310)).